We begin with the raw amino-acid sequence, 284 residues long: Bifunctional protein FolD (284 aa).

NADP(+) is bound by residues 165-167 (GRG), Thr192, and Val233.

Belongs to the tetrahydrofolate dehydrogenase/cyclohydrolase family. In terms of assembly, homodimer.

The enzyme catalyses (6R)-5,10-methylene-5,6,7,8-tetrahydrofolate + NADP(+) = (6R)-5,10-methenyltetrahydrofolate + NADPH. It carries out the reaction (6R)-5,10-methenyltetrahydrofolate + H2O = (6R)-10-formyltetrahydrofolate + H(+). It participates in one-carbon metabolism; tetrahydrofolate interconversion. In terms of biological role, catalyzes the oxidation of 5,10-methylenetetrahydrofolate to 5,10-methenyltetrahydrofolate and then the hydrolysis of 5,10-methenyltetrahydrofolate to 10-formyltetrahydrofolate. The polypeptide is Bifunctional protein FolD (Corynebacterium glutamicum (strain R)).